A 351-amino-acid polypeptide reads, in one-letter code: Dihydroorotate dehydrogenase (quinone) (351 aa).

FMN contacts are provided by residues 61-65 and Thr-85; that span reads AGLDK. A substrate-binding site is contributed by Lys-65. 110-114 lines the substrate pocket; that stretch reads NRMGF. Asn-139 and Asn-172 together coordinate FMN. Asn-172 is a substrate binding site. Ser-175 functions as the Nucleophile in the catalytic mechanism. Asn-177 is a substrate binding site. FMN contacts are provided by Lys-217 and Thr-245. Residue 246–247 coordinates substrate; sequence NT. FMN-binding positions include Gly-268, Gly-297, and 318–319; that span reads YT.

The protein belongs to the dihydroorotate dehydrogenase family. Type 2 subfamily. As to quaternary structure, monomer. Requires FMN as cofactor.

It localises to the cell membrane. It carries out the reaction (S)-dihydroorotate + a quinone = orotate + a quinol. It functions in the pathway pyrimidine metabolism; UMP biosynthesis via de novo pathway; orotate from (S)-dihydroorotate (quinone route): step 1/1. Functionally, catalyzes the conversion of dihydroorotate to orotate with quinone as electron acceptor. This Xylella fastidiosa (strain 9a5c) protein is Dihydroorotate dehydrogenase (quinone).